A 466-amino-acid polypeptide reads, in one-letter code: DNA polymerase delta subunit 3 (466 aa).

The residue at position 2 (Ala-2) is an N-acetylalanine. 2 disordered regions span residues 169-188 and 199-232; these read NNELTTNGHGPPASKQVSQQ and KAAAKTQETNKETKTEAKEVTNASAAGNKAPGKG. Positions 206-217 are enriched in basic and acidic residues; it reads ETNKETKTEAKE. Lys-258 participates in a covalent cross-link: Glycyl lysine isopeptide (Lys-Gly) (interchain with G-Cter in SUMO); alternate. Lys-258 participates in a covalent cross-link: Glycyl lysine isopeptide (Lys-Gly) (interchain with G-Cter in SUMO2); alternate. Residue Lys-261 forms a Glycyl lysine isopeptide (Lys-Gly) (interchain with G-Cter in SUMO2) linkage. Disordered stretches follow at residues 274 to 393 and 406 to 466; these read KLAT…KTYL and ESES…FQRK. Thr-277 carries the post-translational modification Phosphothreonine. A compositionally biased stretch (basic and acidic residues) spans 286–296; sequence KKAEPVKVLQK. A Phosphoserine modification is found at Ser-307. The segment covering 349–361 has biased composition (pro residues); that stretch reads PSPPPPPSPPLEP. Ser-407 and Ser-409 each carry phosphoserine. The residue at position 411 (Thr-411) is a Phosphothreonine. Ser-413 is modified (phosphoserine). Residues 432–441 are compositionally biased toward basic and acidic residues; the sequence is VKKEPREERK. Residue Lys-433 forms a Glycyl lysine isopeptide (Lys-Gly) (interchain with G-Cter in SUMO); alternate linkage. Residue Lys-433 forms a Glycyl lysine isopeptide (Lys-Gly) (interchain with G-Cter in SUMO2); alternate linkage. The segment covering 455 to 466 has biased composition (polar residues); sequence RQVSITGFFQRK. The PIP-box signature appears at 456–463; it reads QVSITGFF. Ser-458 is subject to Phosphoserine.

Component of both the DNA polymerase delta and DNA polymerase zeta complexes. The tetrameric DNA polymerase delta complex (Pol-delta4), which consists of POLD1/p125, POLD2/p50, POLD3/p66/p68 and POLD4/p12, with POLD1 bearing DNA polymerase and 3' to 5' proofreading exonuclease activities. Within this complex, directly interacts with POLD2. Following stress caused by DNA damaging agents or by replication stress, POLD4 is degraded and Pol-delta4 is converted into a trimeric form of the complex (Pol-delta3), which consists of POLD1, POLD2 and POLD3. Pol-delta3 is the major form occurring at S phase replication sites, as well as DNA damage sites. Directly interacts with PCNA, as do POLD1 and POLD4; this interaction stimulates Pol-delta polymerase activity. POLD3 phosphorylation at Ser-458 impairs PCNA binding. Component of the DNA polymerase zeta complex (POLZ), which consists of REV3L, MAD2L2, POLD2 and POLD3, with REV3L bearing DNA polymerase catalytic activity. The DNA polymerase delta complex interacts with POLDIP2; this interaction is probably mediated through direct binding to POLD2. Post-translationally, ubiquitinated, but not targeted to the proteasome. Sumoylated. Sumoylation with SUMO3 may be predominant. Phosphorylation at Ser-458 is catalyzed in vitro by PKA. It is thought to decrease the affinity for PCNA and Pol-delta4 processivity. Can also be phosphorylated in vitro by CDK1-cyclin-A complex, as well as CDK2-cyclin-A and CDK2-cyclin-E complexes. PCNA interferes with CDK-cyclin phosphorylation.

It is found in the cytoplasm. It localises to the nucleus. Accessory component of both the DNA polymerase delta complex and the DNA polymerase zeta complex. As a component of the trimeric and tetrameric DNA polymerase delta complexes (Pol-delta3 and Pol-delta4, respectively), plays a role in high fidelity genome replication, including in lagging strand synthesis, and repair. Required for optimal Pol-delta activity. Stabilizes the Pol-delta complex and plays a major role in Pol-delta stimulation by PCNA. Pol-delta3 and Pol-delta4 are characterized by the absence or the presence of POLD4. They exhibit differences in catalytic activity. Most notably, Pol-delta3 shows higher proofreading activity than Pol-delta4. Although both Pol-delta3 and Pol-delta4 process Okazaki fragments in vitro, Pol-delta3 may also be better suited to fulfill this task, exhibiting near-absence of strand displacement activity compared to Pol-delta4 and stalling on encounter with the 5'-blocking oligonucleotides. Pol-delta3 idling process may avoid the formation of a gap, while maintaining a nick that can be readily ligated. Along with DNA polymerase kappa, DNA polymerase delta carries out approximately half of nucleotide excision repair (NER) synthesis following UV irradiation. In this context, POLD3, along with PCNA and RFC1-replication factor C complex, is required to recruit POLD1, the catalytic subunit of the polymerase delta complex, to DNA damage sites. Under conditions of DNA replication stress, required for the repair of broken replication forks through break-induced replication (BIR). Involved in the translesion synthesis (TLS) of templates carrying O6-methylguanine or abasic sites performed by Pol-delta4, independently of DNA polymerase zeta (REV3L) or eta (POLH). Facilitates abasic site bypass by DNA polymerase delta by promoting extension from the nucleotide inserted opposite the lesion. Also involved in TLS, as a component of the tetrameric DNA polymerase zeta complex. Along with POLD2, dramatically increases the efficiency and processivity of DNA synthesis of the DNA polymerase zeta complex compared to the minimal zeta complex, consisting of only REV3L and REV7. The protein is DNA polymerase delta subunit 3 (POLD3) of Homo sapiens (Human).